A 279-amino-acid chain; its full sequence is HTH-type transcriptional regulator HdfR (279 aa).

Positions 1–58 (MDTELLKTFLEVSRTRHFGRAAESLYLTQSAVSFRIRQLENQLGVNLFTRHRNNIRLT) constitute an HTH lysR-type domain. The H-T-H motif DNA-binding region spans 18–37 (FGRAAESLYLTQSAVSFRIR).

This sequence belongs to the LysR transcriptional regulatory family.

Its function is as follows. Negatively regulates the transcription of the flagellar master operon flhDC by binding to the upstream region of the operon. The protein is HTH-type transcriptional regulator HdfR of Escherichia coli O6:K15:H31 (strain 536 / UPEC).